The primary structure comprises 355 residues: Uroporphyrinogen decarboxylase (355 aa).

Substrate-binding positions include 27–31 (RQAGR), aspartate 77, tyrosine 154, threonine 209, and histidine 328.

It belongs to the uroporphyrinogen decarboxylase family. Homodimer.

Its subcellular location is the cytoplasm. It catalyses the reaction uroporphyrinogen III + 4 H(+) = coproporphyrinogen III + 4 CO2. Its pathway is porphyrin-containing compound metabolism; protoporphyrin-IX biosynthesis; coproporphyrinogen-III from 5-aminolevulinate: step 4/4. Functionally, catalyzes the decarboxylation of four acetate groups of uroporphyrinogen-III to yield coproporphyrinogen-III. The sequence is that of Uroporphyrinogen decarboxylase from Photobacterium profundum (strain SS9).